A 130-amino-acid chain; its full sequence is UPF0146 protein AF_0739.1 (130 aa).

It belongs to the UPF0146 family.

This is UPF0146 protein AF_0739.1 from Archaeoglobus fulgidus (strain ATCC 49558 / DSM 4304 / JCM 9628 / NBRC 100126 / VC-16).